The chain runs to 785 residues: Protein translocase subunit SecA 3 (785 aa).

ATP contacts are provided by residues Q98, 116 to 120 (GEGKT), and D505.

Belongs to the SecA family. As to quaternary structure, monomer and homodimer. Part of the essential Sec protein translocation apparatus which comprises SecA, SecYEG and auxiliary proteins SecDF. Other proteins may also be involved.

It localises to the cell membrane. It is found in the cytoplasm. It carries out the reaction ATP + H2O + cellular proteinSide 1 = ADP + phosphate + cellular proteinSide 2.. Its function is as follows. Part of the Sec protein translocase complex. Interacts with the SecYEG preprotein conducting channel. Has a central role in coupling the hydrolysis of ATP to the transfer of proteins into and across the cell membrane, serving as an ATP-driven molecular motor driving the stepwise translocation of polypeptide chains across the membrane. The protein is Protein translocase subunit SecA 3 of Mycolicibacterium vanbaalenii (strain DSM 7251 / JCM 13017 / BCRC 16820 / KCTC 9966 / NRRL B-24157 / PYR-1) (Mycobacterium vanbaalenii).